Reading from the N-terminus, the 701-residue chain is Putative pentatricopeptide repeat-containing protein At3g25970 (701 aa).

16 PPR repeats span residues 34–64, 65–99, 100–134, 135–165, 166–200, 202–236, 237–267, 269–303, 304–338, 339–371, 372–406, 407–441, 442–472, 474–508, 509–539, and 545–575; these read DIYVSNRILDSYIKFGFLGYANMLFDEMPKR, DSVSWNTMISGYTSCGKLEDAWCLFTCMKRSGSDV, DGYSFSRLLKGIASVKRFDLGEQVHGLVIKGGYEC, NVYVGSSLVDMYAKCERVEDAFEAFKEISEP, NSVSWNALIAGFVQVRDIKTAFWLLGLMEMKAAVT, DAGTFAPLLTLLDDPMFCNLLKQVHAKVLKLGLQH, EITICNAMISSYADCGSVSDAKRVFDGLGGS, DLISWNSMIAGFSKHELKESAFELFIQMQRHWVET, DIYTYTGLLSACSGEEHQIFGKSLHGMVIKKGLEQ, VTSATNALISMYIQFPTGTMEDALSLFESLKSK, DLISWNSIITGFAQKGLSEDAVKFFSYLRSSEIKV, DDYAFSALLRSCSDLATLQLGQQIHALATKSGFVS, NEFVISSLIVMYSKCGIIESARKCFQQISSK, STVAWNAMILGYAQHGLGQVSLDLFSQMCNQNVKL, DHVTFTAILTACSHTGLIQEGLELLNLMEPV, and RMEHYAAAVDLLGRAGLVNKAKELIESMPLN. Residues 580 to 655 are type E motif; that stretch reads VLKTFLGVCR…VPGWSWIEIR (76 aa). Residues 656–686 are type E(+) motif; the sequence is NQVKAFNAEDRSNPLCQDIYMMIKDLTQEMQ.

It belongs to the PPR family. PCMP-E subfamily.

This Arabidopsis thaliana (Mouse-ear cress) protein is Putative pentatricopeptide repeat-containing protein At3g25970 (PCMP-E46).